The sequence spans 62 residues: Toxin Tst2 (62 aa).

Residues 1-62 (KEGYAMDHEG…KVWDYATNKC (62 aa)) enclose the LCN-type CS-alpha/beta domain. 4 cysteine pairs are disulfide-bonded: Cys11–Cys62, Cys15–Cys38, Cys23–Cys43, and Cys27–Cys45. Position 62 is a cysteine amide (Cys62).

Expressed by the venom gland.

It localises to the secreted. Its function is as follows. Alpha toxins bind voltage-independently at site-3 of sodium channels (Nav) and inhibit the inactivation of the activated channels, thereby blocking neuronal transmission. Is toxic to mice. The chain is Toxin Tst2 from Tityus stigmurus (Brazilian scorpion).